A 335-amino-acid chain; its full sequence is Beta-ketoacyl-[acyl-carrier-protein] synthase III (335 aa).

Residues cysteine 119 and histidine 261 contribute to the active site. Residues glutamine 262 to arginine 266 form an ACP-binding region. Asparagine 291 is a catalytic residue.

It belongs to the thiolase-like superfamily. FabH family. In terms of assembly, homodimer.

It is found in the cytoplasm. The enzyme catalyses malonyl-[ACP] + acetyl-CoA + H(+) = 3-oxobutanoyl-[ACP] + CO2 + CoA. The protein operates within lipid metabolism; fatty acid biosynthesis. Catalyzes the condensation reaction of fatty acid synthesis by the addition to an acyl acceptor of two carbons from malonyl-ACP. Catalyzes the first condensation reaction which initiates fatty acid synthesis and may therefore play a role in governing the total rate of fatty acid production. Possesses both acetoacetyl-ACP synthase and acetyl transacylase activities. Its substrate specificity determines the biosynthesis of branched-chain and/or straight-chain of fatty acids. The sequence is that of Beta-ketoacyl-[acyl-carrier-protein] synthase III from Prochlorococcus marinus (strain MIT 9312).